The primary structure comprises 368 residues: MAKKALLIGINYVGTKAELRGCVNDVRRMRISLVERYGFSEENIKMLIDTDSSSIKPTGKNIRQALLDLVEPAKSGDVLFVHYSGHGTRLPAETGEDDDTGYDECIVPSDMNLITDDDFRDLVDMVPKDCPITIISDSCHSGGLIDEAKEQIGESTKKKKDSGDSSTINKETEAEIIEVGNRSLPLETLIDMLKQETGNDDIEVGKIRTTLFDMFGDDSSPKVKKFMNVILSNLQETTTTIQTVSDEVLGSVENLAQEFLEQKLSDDVKPAIQDVYAGAINGALPDNGILISGCQTDQTSSDASPPGHPELAYGALTNAIQIIIGETKGKISNKDLVLKARKLLRKQGFDQRPGLYCNDAYVNARFIC.

Active-site residues include histidine 86 and cysteine 139. At cysteine 139 the chain carries S-nitrosocysteine. The interval 153–174 (GESTKKKKDSGDSSTINKETEA) is disordered.

Belongs to the peptidase C14B family. In terms of processing, proteolytically processed; by an autocatalytic mechanism. In terms of tissue distribution, expressed in roots and flower buds.

The polypeptide is Metacaspase-6 (AMC6) (Arabidopsis thaliana (Mouse-ear cress)).